The chain runs to 757 residues: Transcription factor FBD3 (757 aa).

Residues 1-24 (MSSKRLSQNEQEKSPGTGPPTHKR) are disordered. Residues 31-58 (CNACRMRKSRCDGHRPSCSSCLSLGVNC) constitute a DNA-binding region (zn(2)-C6 fungal-type). Disordered regions lie at residues 106 to 161 (GGTD…DANT) and 202 to 222 (VAPS…TDVP). Basic and acidic residues predominate over residues 111–120 (NNHHNNHDSP). Polar residues predominate over residues 125-135 (TIAQSITSSRP).

It localises to the nucleus. In terms of biological role, transcription factor; part of the Fusarium detoxification of benzoxazolinone cluster involved in the degradation of benzoxazolinones produced by the host plant. Maize, wheat, and rye produce the 2 benzoxazinone phytoanticipins 2,4-dihy-droxy-7-methoxy-1,4-benzoxazin-3-one (DIMBOA) and 2,4-dihydroxy-1,4-benzoxazin-3-one (DIBOA) that, due to their inherent instability once released, spontaneously degrade to the more stable corresponding benzoxazolinones, 6-methoxy-2-benzoxazolinone (MBOA) and 2-benzoxazolinone (BOA), respectively. FDB3 controls the transcription of the FDB gene cluster in response to 6-methoxy-2-benzoxazolinone (MBOA). The polypeptide is Transcription factor FBD3 (Fusarium pseudograminearum (strain CS3096) (Wheat and barley crown-rot fungus)).